Here is a 540-residue protein sequence, read N- to C-terminus: Beta-secretase (540 aa).

An N-terminal signal peptide occupies residues 1–31 (MHFSLPTSRIVVVVPAAAICIVCVLIETCTA). The 355-residue stretch at 81–435 (YYIEVDIGTP…DRENKRVGFA (355 aa)) folds into the Peptidase A1 domain. Catalysis depends on residues Asp-99 and Asp-302. Cystine bridges form between Cys-222-Cys-439, Cys-291-Cys-469, and Cys-345-Cys-397. Residues 483–503 (ITAYVLAAICLVCLIPVIVFA) form a helical membrane-spanning segment. At 504–540 (LTHQINKRCKGRRGRGVVNHHRLDQEGLAENEPNSDP) the chain is on the cytoplasmic side.

This sequence belongs to the peptidase A1 family.

It is found in the membrane. The sequence is that of Beta-secretase from Strongylocentrotus purpuratus (Purple sea urchin).